We begin with the raw amino-acid sequence, 101 residues long: Small ribosomal subunit protein uS14 (101 aa).

Belongs to the universal ribosomal protein uS14 family. Part of the 30S ribosomal subunit. Contacts proteins S3 and S10.

Its function is as follows. Binds 16S rRNA, required for the assembly of 30S particles and may also be responsible for determining the conformation of the 16S rRNA at the A site. The polypeptide is Small ribosomal subunit protein uS14 (Stenotrophomonas maltophilia (strain K279a)).